Here is a 511-residue protein sequence, read N- to C-terminus: Vicilin-like seed storage protein At2g28490 (511 aa).

An N-terminal signal peptide occupies residues 1–27 (MEKNKRAIGFLLLVVLINGVMMTRSNG). The segment at 54–81 (GGGGGGAWGGEGEGGGEWGGGGEGGGGG) is disordered. 2 consecutive Cupin type-1 domains span residues 86–238 (FMMR…PELQ) and 329–480 (YNIY…ETMR). Asn231, Asn369, Asn403, and Asn464 each carry an N-linked (GlcNAc...) asparagine glycan.

Belongs to the 7S seed storage protein family.

Seed storage protein. The chain is Vicilin-like seed storage protein At2g28490 from Arabidopsis thaliana (Mouse-ear cress).